The primary structure comprises 969 residues: Vacuolar membrane protease (969 aa).

Over 1–12 the chain is Cytoplasmic; sequence MTRVNSIIGFRP. A helical transmembrane segment spans residues 13–33; sequence IPVTLLTVITYVSLFSALLFI. Over 34–381 the chain is Vacuolar; it reads DRQPPAVAKK…RAFSVLHLHT (348 aa). Asn125 carries N-linked (GlcNAc...) asparagine glycosylation. 2 residues coordinate Zn(2+): His166 and Asp178. Glu216 serves as the catalytic Proton acceptor. Zn(2+) is bound by residues Glu217, Glu242, and His315. Asn355 carries an N-linked (GlcNAc...) asparagine glycan. Residues 382-402 form a helical membrane-spanning segment; the sequence is IFAFTITLIVVPFVVVLVAMW. The Cytoplasmic portion of the chain corresponds to 403–438; sequence ALGHFDKLYFFSNTAYIPPPPEHSIASRTTQGWRGV. Residues 439-459 traverse the membrane as a helical segment; that stretch reads LRFPVAFVAASAGVVGMAFLI. The Vacuolar segment spans residues 460–469; sequence NKINPMVVYA. The helical transmembrane segment at 470 to 490 threads the bilayer; it reads SQYTVWTCFLSTWWIIAWVIL. Over 491–505 the chain is Cytoplasmic; sequence RGADAVRPTALARGY. Residues 506-526 traverse the membrane as a helical segment; sequence GFLEQWLLWLVAMIGVAISIG. Residues 527–531 lie on the Vacuolar side of the membrane; the sequence is KSHLG. Residues 532–552 traverse the membrane as a helical segment; sequence SGYWVLVFYSGFFTSAFISLL. At 553-662 the chain is on the cytoplasmic side; sequence EMAALQKKSE…WSKDLPSWTW (110 aa). The disordered stretch occupies residues 571-629; sequence DQAYPPEEHSQTGASGNISNRAANDDDDAGEHATEETPLFRGPNRPLSFAPHRNPRYDN. Residues 581 to 592 are compositionally biased toward polar residues; that stretch reads QTGASGNISNRA. The chain crosses the membrane as a helical span at residues 663–683; that stretch reads ILQFLATVPLQLVLAGSVALL. At 684–698 the chain is on the vacuolar side; it reads LGNALAQTGADGSDM. The helical transmembrane segment at 699-719 threads the bilayer; that stretch reads LTVLLGFGVFSIILLLPVAPF. Residues 720-727 lie on the Cytoplasmic side of the membrane; the sequence is LHRITYHV. A helical membrane pass occupies residues 728–748; that stretch reads TLFIFVIFVGTFIYNLAAPPF. Over 749-969 the chain is Vacuolar; it reads SPNARLKVYF…LVEGSVPFMI (221 aa). A glycan (N-linked (GlcNAc...) asparagine) is linked at Asn840.

The protein belongs to the peptidase M28 family. The cofactor is Zn(2+).

It is found in the vacuole membrane. Its function is as follows. May be involved in vacuolar sorting and osmoregulation. This chain is Vacuolar membrane protease, found in Tuber melanosporum (strain Mel28) (Perigord black truffle).